A 972-amino-acid polypeptide reads, in one-letter code: MSLPRCPRTRTVMFSRTLTRCYPQRTLWIAILCVICSWTLSTAGATTIRDKEVKPDAPQDLTAIPVKAEAIVLTWKKPLKGQTDGYIVVYCLKRNKGNGCERQKIEGGNVTEVEVTNLYANHTYQFQVQSWYSDHPKGASTGYIEASGTPPIPPTLRRNFKGLVEKSLGFEHKIPCPVKADPRPYTRWLKNGTDLTPNDPDDNVSFTKTSIVFKRLRFSDAGLYTCVASNFFGQPIHVNFTLIVVDTHSESYAESSVLESFSSLELETGPYNETEEEETHFPRFTDTERMEPEKPLPSNTKVRLECGARGTPTPNITWIKDGVQKWKINVIRPTRVEEKGFVLIIRRAIVRDTGKYTCIVSNQYGTIEHTYDVKIRERLPVKPIMSPMKNVTATVGSNTSFVCRVVNDLTPHFAWMRFNGTNNTKQRLTDIDDHISILQQRWVEEPMLTCDEFLDVFYQNQSKRMLECLHLIQLETQGGMEEANQLKLYNVQYEDEGPYLCVAGNFYGMSWEGAYLDVVEPTTQAPVRTNPPAVYIPNNMQPTSKTQLIIFSVVGFVVVLILVTCIAILCKQTQVRHRRPSDKPDISGPKHLYRQTSVDSTQSIAPLFGGRNRLTSSLTVISEYDIPLDPEWEFPRDRLTVGKTIGEGAFGKVVIGEAVGIVCQEKTSTVAVKMLKANAMDREFSDLISELAMMKMIGKNPNIINLLGCCTQEGPPYVIVEFAHHGNLRDFLRSRRPPEEYEKSILLTTSQTLTNKDLMSMAYQVARGMDFLASKKCIHRDLAARNVLVTEDFEMKICDFGLARDIHYIDFYRKTTDGRLPVKWMAPEALFDRMFTTQSDVWSFGILLWEIMTLGGTPYPSVPVEQMFDYLRSGKRLEKPQNTSLEIYHILCECWRTSPGQRPTFCELVEDLDRIISVSSNQDYLDLEAVGDAPVKTFQESERMAFMGFRAPLSPQVYYKVPQTRDCCPYAN.

Residues 1-43 form the signal peptide; it reads MSLPRCPRTRTVMFSRTLTRCYPQRTLWIAILCVICSWTLSTA. Over 44-547 the chain is Extracellular; sequence GATTIRDKEV…NNMQPTSKTQ (504 aa). The Fibronectin type-III domain occupies 57 to 152; that stretch reads APQDLTAIPV…YIEASGTPPI (96 aa). N-linked (GlcNAc...) asparagine glycosylation is found at asparagine 109, asparagine 121, asparagine 191, asparagine 203, asparagine 239, asparagine 272, asparagine 315, asparagine 390, asparagine 398, asparagine 419, asparagine 422, and asparagine 460. In terms of domain architecture, Ig-like C2-type 1 spans 150-242; sequence PPIPPTLRRN…GQPIHVNFTL (93 aa). Cysteine 176 and cysteine 226 are oxidised to a cystine. Ig-like C2-type domains are found at residues 282–374 and 383–517; these read PRFT…YDVK and PIMS…AYLD. A disulfide bridge links cysteine 306 with cysteine 358. A disulfide bridge links cysteine 403 with cysteine 501. The chain crosses the membrane as a helical span at residues 548-568; the sequence is LIIFSVVGFVVVLILVTCIAI. Residues 569 to 972 are Cytoplasmic-facing; that stretch reads LCKQTQVRHR…QTRDCCPYAN (404 aa). The Protein kinase domain maps to 639 to 925; sequence LTVGKTIGEG…ISVSSNQDYL (287 aa). Residues 645–653 and lysine 673 contribute to the ATP site; that span reads IGEGAFGKV. Catalysis depends on aspartate 781, which acts as the Proton acceptor. Position 812 is a phosphotyrosine; by autocatalysis (tyrosine 812).

It belongs to the protein kinase superfamily. Tyr protein kinase family. Fibroblast growth factor receptor subfamily.

The protein localises to the membrane. It carries out the reaction L-tyrosyl-[protein] + ATP = O-phospho-L-tyrosyl-[protein] + ADP + H(+). Functionally, receptor for basic fibroblast growth factor. The polypeptide is Fibroblast growth factor receptor (FGFR) (Strongylocentrotus purpuratus (Purple sea urchin)).